Reading from the N-terminus, the 404-residue chain is Cysteine desulfurase IscS (404 aa).

Pyridoxal 5'-phosphate contacts are provided by residues 75-76 (AT), N155, Q183, and 203-205 (SAH). Residue K206 is modified to N6-(pyridoxal phosphate)lysine. T243 provides a ligand contact to pyridoxal 5'-phosphate. Residue C328 is the Cysteine persulfide intermediate of the active site. C328 is a [2Fe-2S] cluster binding site.

It belongs to the class-V pyridoxal-phosphate-dependent aminotransferase family. NifS/IscS subfamily. As to quaternary structure, homodimer. Forms a heterotetramer with IscU, interacts with other sulfur acceptors. Pyridoxal 5'-phosphate is required as a cofactor.

The protein resides in the cytoplasm. It catalyses the reaction (sulfur carrier)-H + L-cysteine = (sulfur carrier)-SH + L-alanine. It functions in the pathway cofactor biosynthesis; iron-sulfur cluster biosynthesis. In terms of biological role, master enzyme that delivers sulfur to a number of partners involved in Fe-S cluster assembly, tRNA modification or cofactor biosynthesis. Catalyzes the removal of elemental sulfur atoms from cysteine to produce alanine. Functions as a sulfur delivery protein for Fe-S cluster synthesis onto IscU, an Fe-S scaffold assembly protein, as well as other S acceptor proteins. This is Cysteine desulfurase IscS from Neisseria meningitidis serogroup C / serotype 2a (strain ATCC 700532 / DSM 15464 / FAM18).